The chain runs to 294 residues: Lipoyl synthase (294 aa).

Residues Cys-35, Cys-40, Cys-46, Cys-61, Cys-65, Cys-68, and Ser-273 each coordinate [4Fe-4S] cluster. The 216-residue stretch at 47-262 folds into the Radical SAM core domain; it reads FRQRQATFLI…REQALSMGFE (216 aa).

It belongs to the radical SAM superfamily. Lipoyl synthase family. Requires [4Fe-4S] cluster as cofactor.

The protein resides in the cytoplasm. It catalyses the reaction [[Fe-S] cluster scaffold protein carrying a second [4Fe-4S](2+) cluster] + N(6)-octanoyl-L-lysyl-[protein] + 2 oxidized [2Fe-2S]-[ferredoxin] + 2 S-adenosyl-L-methionine + 4 H(+) = [[Fe-S] cluster scaffold protein] + N(6)-[(R)-dihydrolipoyl]-L-lysyl-[protein] + 4 Fe(3+) + 2 hydrogen sulfide + 2 5'-deoxyadenosine + 2 L-methionine + 2 reduced [2Fe-2S]-[ferredoxin]. It functions in the pathway protein modification; protein lipoylation via endogenous pathway; protein N(6)-(lipoyl)lysine from octanoyl-[acyl-carrier-protein]: step 2/2. Catalyzes the radical-mediated insertion of two sulfur atoms into the C-6 and C-8 positions of the octanoyl moiety bound to the lipoyl domains of lipoate-dependent enzymes, thereby converting the octanoylated domains into lipoylated derivatives. This is Lipoyl synthase from Geotalea daltonii (strain DSM 22248 / JCM 15807 / FRC-32) (Geobacter daltonii).